Here is an 82-residue protein sequence, read N- to C-terminus: uncharacterized protein (82 aa).

The segment at 1-20 (MMNLSPPFKSPSGSSRAGRR) is disordered.

This is an uncharacterized protein from Archaeoglobus fulgidus (strain ATCC 49558 / DSM 4304 / JCM 9628 / NBRC 100126 / VC-16).